The primary structure comprises 440 residues: MQAYFDQLDRVRYEGSKSSNPLAFRHYNPDELVLGKRMEEHLRFAACYWHTFCWNGADMFGVGAFNRPWQQPGEALALAKRKADVAFEFFHKLHVPFYCFHDVDVSPEGASLKEYINNFAQMVDVLAGKQEESGVKLLWGTANCFTNPRYGAGAATNPDPEVFSWAATQVVTAMEATHKLGGENYVLWGGREGYETLLNTDLRQEREQLGRFMQMVVEHKHKIGFQGTLLIEPKPQEPTKHQYDYDAATVYGFLKQFGLEKEIKLNIEANHATLAGHSFHHEIATAIALGLFGSVDANRGDAQLGWDTDQFPNSVEENALVMYEILKAGGFTTGGLNFDAKVRRQSTDKYDLFYGHIGAMDTMALALKIAACMIEDGELDKRIAQRYSGWNSELGQQILKGQMSLADLAKYAQEHNLSPVHQSGRQEQLENLVNHYLFDK.

Residues His101 and Asp104 contribute to the active site. Mg(2+) contacts are provided by Glu232, Glu268, His271, Asp296, Asp307, Asp309, and Asp339.

This sequence belongs to the xylose isomerase family. In terms of assembly, homotetramer. Requires Mg(2+) as cofactor.

The protein localises to the cytoplasm. The enzyme catalyses alpha-D-xylose = alpha-D-xylulofuranose. The chain is Xylose isomerase from Escherichia coli O157:H7.